The primary structure comprises 553 residues: Vacuolar fusion protein MON1 homolog B (553 aa).

M1 is modified (N-acetylmethionine). Disordered stretches follow at residues 1 to 111 and 534 to 553; these read MEAG…DEDW and STPP…FTGL. Over residues 23–35 the composition is skewed to basic and acidic residues; sequence FPREEAGDSERVH. Residues 52-72 are compositionally biased toward polar residues; that stretch reads KDQPSSLLSPLPQTEAASSTC. S57 is subject to Phosphoserine. The span at 78–95 shows a compositional bias: low complexity; the sequence is AAASDSSPPGEPESNSEG. Positions 96–108 are enriched in acidic residues; it reads QGEDPDDGGDPSD. A compositionally biased stretch (polar residues) spans 541–553; that stretch reads ADQAPNNGLFTGL.

Belongs to the MON1/SAND family. In terms of assembly, interacts with CCNT2; down-regulates CCNT2-mediated activation of viral promoters during herpes simplex virus 1/HHV-1 infection. Found in a complex with RMC1, CCZ1 MON1A and MON1B.

The polypeptide is Vacuolar fusion protein MON1 homolog B (Mon1b) (Mus musculus (Mouse)).